The primary structure comprises 257 residues: Synaptosomal-associated protein 29 (257 aa).

Residues 1–42 (MSGYPKSYNPFDDDVEDEDTRPAPWKDARDLPDGPDPPIDRQ) are disordered. A compositionally biased stretch (basic and acidic residues) spans 20 to 32 (TRPAPWKDARDLP). Phosphoserine is present on residues Ser77, Ser78, Ser114, Ser163, Ser181, Ser203, and Ser209. The t-SNARE coiled-coil homology domain maps to 195 to 257 (RAYHQKIDSN…KSTEKKVRQL (63 aa)).

The protein belongs to the SNAP-25 family. In terms of assembly, forms a SNARE complex, composed of VAMP8, SNAP29 and STX17, involved in fusion of autophagosome with lysosome. Interacts with multiple syntaxins including STX6. Interacts with EIPR1. Interacts with STX17; this interaction is increased in the absence of TMEM39A. Widely expressed.

Its subcellular location is the cytoplasm. The protein localises to the golgi apparatus membrane. It localises to the cytoplasmic vesicle. The protein resides in the autophagosome membrane. It is found in the cell projection. Its subcellular location is the cilium membrane. Functionally, SNAREs, soluble N-ethylmaleimide-sensitive factor-attachment protein receptors, are essential proteins for fusion of cellular membranes. SNAREs localized on opposing membranes assemble to form a trans-SNARE complex, an extended, parallel four alpha-helical bundle that drives membrane fusion. SNAP29 is a SNARE involved in autophagy through the direct control of autophagosome membrane fusion with the lysososome membrane. Also plays a role in ciliogenesis by regulating membrane fusions. This Rattus norvegicus (Rat) protein is Synaptosomal-associated protein 29.